Reading from the N-terminus, the 185-residue chain is Peptidyl-tRNA hydrolase (185 aa).

Tyr14 lines the tRNA pocket. Catalysis depends on His19, which acts as the Proton acceptor. Phe64, Asn66, and Asn112 together coordinate tRNA.

It belongs to the PTH family. In terms of assembly, monomer.

Its subcellular location is the cytoplasm. It carries out the reaction an N-acyl-L-alpha-aminoacyl-tRNA + H2O = an N-acyl-L-amino acid + a tRNA + H(+). In terms of biological role, hydrolyzes ribosome-free peptidyl-tRNAs (with 1 or more amino acids incorporated), which drop off the ribosome during protein synthesis, or as a result of ribosome stalling. Its function is as follows. Catalyzes the release of premature peptidyl moieties from peptidyl-tRNA molecules trapped in stalled 50S ribosomal subunits, and thus maintains levels of free tRNAs and 50S ribosomes. This is Peptidyl-tRNA hydrolase from Caldanaerobacter subterraneus subsp. tengcongensis (strain DSM 15242 / JCM 11007 / NBRC 100824 / MB4) (Thermoanaerobacter tengcongensis).